The primary structure comprises 476 residues: MASYEAVIGLEVHAQLRTRSKLFCSCSTAFGADPNAHVCEVCAGMPGVLPVLNEKAVEFAARMGIAVGCTVNRTSVFARKNYFYPDLPKGYQISQYEQPICEHGHLDISVGDAVKRIGITRIHLEDDAGKNIHSAGENVSYVDLNRTGVPLIEIVSEPDLRSAEEAVAYLKALRAIVVHLGICDGNMEEGSFRCDANVSLRPRGAAEFGTRAELKNLNSFRHVQRAIEYEISRQADLLDDGDKVVQETRLYDSVKNITVSMRGKEEAHDYRYFPDPDLIPIHIDEARLAEWQATLPELPQARLERFMSSFGLSAQDAEVLTAERDHAEFFEAAVKLYDQPRKIANMMLGPLQRELNQRGTSLAVSAMRPEALAELVRIIDAGLISAKIGNDVFGELFENGAMPEAFVRERGLVQISDTSAIEQAVDEVIAENPAEVEAYRGGKTKLVSFFVGQVMRKTRGKANPALVNELLASKLG.

Belongs to the GatB/GatE family. GatB subfamily. In terms of assembly, heterotrimer of A, B and C subunits.

The enzyme catalyses L-glutamyl-tRNA(Gln) + L-glutamine + ATP + H2O = L-glutaminyl-tRNA(Gln) + L-glutamate + ADP + phosphate + H(+). It carries out the reaction L-aspartyl-tRNA(Asn) + L-glutamine + ATP + H2O = L-asparaginyl-tRNA(Asn) + L-glutamate + ADP + phosphate + 2 H(+). Allows the formation of correctly charged Asn-tRNA(Asn) or Gln-tRNA(Gln) through the transamidation of misacylated Asp-tRNA(Asn) or Glu-tRNA(Gln) in organisms which lack either or both of asparaginyl-tRNA or glutaminyl-tRNA synthetases. The reaction takes place in the presence of glutamine and ATP through an activated phospho-Asp-tRNA(Asn) or phospho-Glu-tRNA(Gln). In Nitratidesulfovibrio vulgaris (strain ATCC 29579 / DSM 644 / CCUG 34227 / NCIMB 8303 / VKM B-1760 / Hildenborough) (Desulfovibrio vulgaris), this protein is Aspartyl/glutamyl-tRNA(Asn/Gln) amidotransferase subunit B.